Here is a 235-residue protein sequence, read N- to C-terminus: MRPSNREHDQLRPVTITRNFTNYAEGSVLVEFGQTKVICNASIVEGVPRFLKGKNQGWITAEYGMLPRATHSRTEREASKGKQGGRTLEIQRLIGRSLRACIDLKVLGENTITLDCDVIQADGGTRTAAITGSCVAMRDAIHWMVQREKIKKMPVFNYVAAVSVGIYRGQPVLDLDYAEDVLAETDMNVVMNEQGHFIEVQGTAEDNSFNREQLNSMLSLAEIGIPQLIEIQKNA.

Phosphate-binding positions include Arg-86 and 124 to 126 (GTR).

Belongs to the RNase PH family. As to quaternary structure, homohexameric ring arranged as a trimer of dimers.

The enzyme catalyses tRNA(n+1) + phosphate = tRNA(n) + a ribonucleoside 5'-diphosphate. Phosphorolytic 3'-5' exoribonuclease that plays an important role in tRNA 3'-end maturation. Removes nucleotide residues following the 3'-CCA terminus of tRNAs; can also add nucleotides to the ends of RNA molecules by using nucleoside diphosphates as substrates, but this may not be physiologically important. Probably plays a role in initiation of 16S rRNA degradation (leading to ribosome degradation) during starvation. The polypeptide is Ribonuclease PH (Legionella pneumophila (strain Corby)).